Reading from the N-terminus, the 861-residue chain is DNA mismatch repair protein MutS (861 aa).

618 to 625 is a binding site for ATP; the sequence is GPNMGGKS.

Belongs to the DNA mismatch repair MutS family.

This protein is involved in the repair of mismatches in DNA. It is possible that it carries out the mismatch recognition step. This protein has a weak ATPase activity. The chain is DNA mismatch repair protein MutS from Shewanella sp. (strain MR-4).